A 353-amino-acid polypeptide reads, in one-letter code: UPF0283 membrane protein YcjF (353 aa).

The span at 1 to 19 (MSEPLKPRIDFAEPLKEEP) shows a compositional bias: basic and acidic residues. The interval 1 to 35 (MSEPLKPRIDFAEPLKEEPTSAFKAQQTFSEAESR) is disordered. Transmembrane regions (helical) follow at residues 70–90 (MVMGGLALFGASVVGQGVQWT), 100–120 (VALGGCAAGALIIGAGVGSVV), and 213–233 (ESTLMIAVSPLALVDMAFIAW).

This sequence belongs to the UPF0283 family.

The protein resides in the cell inner membrane. This is UPF0283 membrane protein YcjF from Salmonella paratyphi C (strain RKS4594).